A 146-amino-acid polypeptide reads, in one-letter code: Hemoglobin subunit beta (146 aa).

Val-1 is subject to N-acetylvaline. Residues 2 to 146 form the Globin domain; it reads HLTAEEKSAV…VANALAHKYH (145 aa). Position 12 is a phosphothreonine (Thr-12). Ser-44 carries the phosphoserine modification. The residue at position 59 (Lys-59) is an N6-acetyllysine. His-63 is a binding site for heme b. The residue at position 82 (Lys-82) is an N6-acetyllysine. A heme b-binding site is contributed by His-92. Cys-93 carries the post-translational modification S-nitrosocysteine. Lys-144 bears the N6-acetyllysine mark.

This sequence belongs to the globin family. As to quaternary structure, heterotetramer of two alpha chains and two beta chains. In terms of tissue distribution, red blood cells.

Involved in oxygen transport from the lung to the various peripheral tissues. This is Hemoglobin subunit beta (HBB) from Leptonychotes weddellii (Weddell seal).